The following is a 387-amino-acid chain: Proteinase R (387 aa).

Positions 1–21 (MRLSILLGLLPLAPRPPAVDA) are cleaved as a signal peptide. A propeptide spanning residues 22–108 (VEQRSEPAPL…IEQDAIVNIN (87 aa)) is cleaved from the precursor. Residues 42-107 (KYIVKLKEGS…YIEQDAIVNI (66 aa)) form the Inhibitor I9 domain. The Peptidase S8 domain maps to 115–387 (PWGLARISST…NLLAYNNYQG (273 aa)). Thr-124 contributes to the Ca(2+) binding site. Cystine bridges form between Cys-142/Cys-231 and Cys-286/Cys-357. Residues Asp-147 and His-177 each act as charge relay system in the active site. Asp-308 is a binding site for Ca(2+). The Charge relay system role is filled by Ser-332. Asp-368 is a Ca(2+) binding site.

Belongs to the peptidase S8 family. It depends on Ca(2+) as a cofactor.

Functionally, serine proteinase. The protein is Proteinase R (PROR) of Parengyodontium album (Tritirachium album).